A 545-amino-acid polypeptide reads, in one-letter code: DnaJ homolog subfamily C member 21 (545 aa).

The region spanning 3-69 is the J domain; it reads CHYEVLGVKR…QERAWYDNHR (67 aa). Disordered stretches follow at residues 122–141, 276–302, 331–497, and 522–545; these read EKEH…SFGE, EYGQ…IANV, SFKS…KEVN, and HATA…RKNR. Composition is skewed to acidic residues over residues 129–141 and 283–295; these read EEDE…SFGE and DASD…EELE. Residues 180–286 adopt a coiled-coil conformation; sequence RWEKRAMEKE…YGQEFGDASD (107 aa). The segment at 323–347 adopts a C2H2-type 1 zinc-finger fold; the sequence is LYCPACDKSFKSDKAMKNHSKSKKH. The span at 339–348 shows a compositional bias: basic residues; sequence KNHSKSKKHR. The segment covering 372 to 388 has biased composition (acidic residues); that stretch reads REEDDEEEDDDDDDEQN. Positions 394-406 are enriched in basic residues; it reads KLSKRQKKKKRLQ. The C2H2-type 2 zinc-finger motif lies at 498 to 522; that stretch reads LRCVTCQYEFTTRNKLFDHLKSTGH. Over residues 535–545 the composition is skewed to basic residues; the sequence is SKKKKDSRKNR.

Its function is as follows. May act as a co-chaperone for HSP70. The polypeptide is DnaJ homolog subfamily C member 21 (dnajc21) (Danio rerio (Zebrafish)).